The following is a 458-amino-acid chain: Flavohemoprotein (458 aa).

In terms of domain architecture, Globin spans 2 to 158 (PLSEDTIKAV…LAHLFVRREE (157 aa)). H107 serves as a coordination point for heme b. Active-site charge relay system residues include Y117 and E157. A reductase region spans residues 169-457 (GGWRQTRSFR…FEMFGPFKPL (289 aa)). In terms of domain architecture, FAD-binding FR-type spans 172 to 279 (RQTRSFRVEE…APPYGDFFLE (108 aa)). FAD is bound by residues Y211 and 228–231 (RQYS). 320–325 (GIGQTP) is a binding site for NADP(+). Position 450–453 (450–453 (MFGP)) interacts with FAD.

Belongs to the globin family. Two-domain flavohemoproteins subfamily. It in the C-terminal section; belongs to the flavoprotein pyridine nucleotide cytochrome reductase family. As to quaternary structure, monomer. Heme b serves as cofactor. Requires FAD as cofactor.

The enzyme catalyses 2 nitric oxide + NADPH + 2 O2 = 2 nitrate + NADP(+) + H(+). It carries out the reaction 2 nitric oxide + NADH + 2 O2 = 2 nitrate + NAD(+) + H(+). Its function is as follows. Flavohemoprotein involved in nitric oxide (NO) detoxification in an aerobic process, termed nitric oxide dioxygenase (NOD) reaction that utilizes O(2) and NAD(P)H to convert NO to nitrate, which protects the protozoan parasite from various noxious nitrogen compounds. Therefore, plays a central role in the inducible response to nitrosative stress. May also be involved in O(2) detoxification. The chain is Flavohemoprotein (hmpA) from Giardia intestinalis (strain ATCC 50581 / GS clone H7) (Giardia lamblia).